A 330-amino-acid polypeptide reads, in one-letter code: Ketol-acid reductoisomerase (NADP(+)) (330 aa).

Residues 1-181 form the KARI N-terminal Rossmann domain; the sequence is MNAYYEQDAD…GGTKAGVIET (181 aa). NADP(+)-binding positions include 24–27, R47, S50, S52, and 82–85; these read FGSQ and DQYQ. H107 is an active-site residue. G133 is an NADP(+) binding site. Positions 182–327 constitute a KARI C-terminal knotted domain; sequence TFKNETETDL…AKLRDMMSWL (146 aa). D190, E194, E226, and E230 together coordinate Mg(2+). S251 contacts substrate.

Belongs to the ketol-acid reductoisomerase family. Mg(2+) is required as a cofactor.

The enzyme catalyses (2R)-2,3-dihydroxy-3-methylbutanoate + NADP(+) = (2S)-2-acetolactate + NADPH + H(+). It carries out the reaction (2R,3R)-2,3-dihydroxy-3-methylpentanoate + NADP(+) = (S)-2-ethyl-2-hydroxy-3-oxobutanoate + NADPH + H(+). The protein operates within amino-acid biosynthesis; L-isoleucine biosynthesis; L-isoleucine from 2-oxobutanoate: step 2/4. It participates in amino-acid biosynthesis; L-valine biosynthesis; L-valine from pyruvate: step 2/4. Functionally, involved in the biosynthesis of branched-chain amino acids (BCAA). Catalyzes an alkyl-migration followed by a ketol-acid reduction of (S)-2-acetolactate (S2AL) to yield (R)-2,3-dihydroxy-isovalerate. In the isomerase reaction, S2AL is rearranged via a Mg-dependent methyl migration to produce 3-hydroxy-3-methyl-2-ketobutyrate (HMKB). In the reductase reaction, this 2-ketoacid undergoes a metal-dependent reduction by NADPH to yield (R)-2,3-dihydroxy-isovalerate. This is Ketol-acid reductoisomerase (NADP(+)) from Chlorobium phaeobacteroides (strain BS1).